The sequence spans 695 residues: WD repeat-containing protein 93 (695 aa).

The segment at 1-35 is disordered; that stretch reads MSSFKGNQAQKRRLSVFPKGPLEIPSPTEADWPKD. Residues 421-460 form a WD repeat; that stretch reads PCAAPIVMSQISSFSSYLALVCEDGVLILWDLAEGFLFGV.

In terms of tissue distribution, testis-specific. Expressed in spermatogonia, spermatocytes and spermatids.

This Mus musculus (Mouse) protein is WD repeat-containing protein 93 (Wdr93).